The chain runs to 407 residues: WEB family protein At3g51720 (407 aa).

Coiled-coil stretches lie at residues 72-99 (KVLK…DKEN), 128-217 (SVGL…ARAA), and 247-278 (EEIL…EAEE).

The protein belongs to the WEB family.

This is WEB family protein At3g51720 from Arabidopsis thaliana (Mouse-ear cress).